The primary structure comprises 271 residues: Formamidopyrimidine-DNA glycosylase (271 aa).

The Schiff-base intermediate with DNA role is filled by Pro-2. Catalysis depends on Glu-3, which acts as the Proton donor. Lys-58 serves as the catalytic Proton donor; for beta-elimination activity. The DNA site is built by His-92, Arg-111, and Arg-152. An FPG-type zinc finger spans residues 237–271 (MVYGREGEACRHCGGELKHATIGQRATVWCAACQR). Arg-261 (proton donor; for delta-elimination activity) is an active-site residue.

Belongs to the FPG family. Monomer. Zn(2+) is required as a cofactor.

It carries out the reaction Hydrolysis of DNA containing ring-opened 7-methylguanine residues, releasing 2,6-diamino-4-hydroxy-5-(N-methyl)formamidopyrimidine.. It catalyses the reaction 2'-deoxyribonucleotide-(2'-deoxyribose 5'-phosphate)-2'-deoxyribonucleotide-DNA = a 3'-end 2'-deoxyribonucleotide-(2,3-dehydro-2,3-deoxyribose 5'-phosphate)-DNA + a 5'-end 5'-phospho-2'-deoxyribonucleoside-DNA + H(+). In terms of biological role, involved in base excision repair of DNA damaged by oxidation or by mutagenic agents. Acts as a DNA glycosylase that recognizes and removes damaged bases. Has a preference for oxidized purines, such as 7,8-dihydro-8-oxoguanine (8-oxoG). Has AP (apurinic/apyrimidinic) lyase activity and introduces nicks in the DNA strand. Cleaves the DNA backbone by beta-delta elimination to generate a single-strand break at the site of the removed base with both 3'- and 5'-phosphates. The sequence is that of Formamidopyrimidine-DNA glycosylase from Xanthomonas campestris pv. campestris (strain ATCC 33913 / DSM 3586 / NCPPB 528 / LMG 568 / P 25).